The chain runs to 637 residues: Formate--tetrahydrofolate ligase (637 aa).

81–88 (TPLGEGKS) provides a ligand contact to ATP.

The protein belongs to the formate--tetrahydrofolate ligase family. Homodimer.

It catalyses the reaction (6S)-5,6,7,8-tetrahydrofolate + formate + ATP = (6R)-10-formyltetrahydrofolate + ADP + phosphate. It functions in the pathway one-carbon metabolism; tetrahydrofolate interconversion. This chain is Formate--tetrahydrofolate ligase, found in Spinacia oleracea (Spinach).